The following is a 923-amino-acid chain: Rap guanine nucleotide exchange factor 3 (923 aa).

Residue serine 79 is modified to Phosphoserine. The DEP domain occupies 110–186; sequence ATCPNLIRDR…RDAQFYRFPG (77 aa). Positions 218-242 are interaction with PDE3B; sequence TVALRKPPGQRTDEELDLIFEELLH. Residues 311–314 and 321–322 contribute to the 3',5'-cyclic AMP site; these read GQLA and RA. The N-terminal Ras-GEF domain occupies 384 to 518; sequence NRYTVMSGTP…EQWPERRRCH (135 aa). Residues 398-422 form an interaction with PDE3B region; sequence ELLLEAMGPDSSAHDPTETFLSDFL. Serine 528 and serine 864 each carry phosphoserine. A Ras-GEF domain is found at 662–889; that stretch reads SAKDLAGQLT…ARISTCSEQS (228 aa).

In terms of assembly, interacts with PDE3B and PIK3R6; form a signaling complex that regulates phosphatidylinositol 3-kinase gamma in angiogenesis. In terms of tissue distribution, widely expressed with highest levels in adult kidney, heart, thyroid and brain, and fetal kidney.

It is found in the endomembrane system. Its function is as follows. Guanine nucleotide exchange factor (GEF) for RAP1A and RAP2A small GTPases that is activated by binding cAMP. Through simultaneous binding of PDE3B to RAPGEF3 and PIK3R6 is assembled in a signaling complex in which it activates the PI3K gamma complex and which is involved in angiogenesis. Plays a role in the modulation of the cAMP-induced dynamic control of endothelial barrier function through a pathway that is independent on Rho-mediated signaling. Required for the actin rearrangement at cell-cell junctions, such as stress fibers and junctional actin. This Homo sapiens (Human) protein is Rap guanine nucleotide exchange factor 3 (RAPGEF3).